The chain runs to 636 residues: 1-deoxy-D-xylulose-5-phosphate synthase (636 aa).

Thiamine diphosphate-binding positions include His-74 and 115-117 (GHA). Residue Asp-146 coordinates Mg(2+). Residues 147 to 148 (GA), Asn-175, Tyr-285, and Glu-368 each bind thiamine diphosphate. Asn-175 contacts Mg(2+).

This sequence belongs to the transketolase family. DXPS subfamily. In terms of assembly, homodimer. It depends on Mg(2+) as a cofactor. Requires thiamine diphosphate as cofactor.

It catalyses the reaction D-glyceraldehyde 3-phosphate + pyruvate + H(+) = 1-deoxy-D-xylulose 5-phosphate + CO2. It functions in the pathway metabolic intermediate biosynthesis; 1-deoxy-D-xylulose 5-phosphate biosynthesis; 1-deoxy-D-xylulose 5-phosphate from D-glyceraldehyde 3-phosphate and pyruvate: step 1/1. In terms of biological role, catalyzes the acyloin condensation reaction between C atoms 2 and 3 of pyruvate and glyceraldehyde 3-phosphate to yield 1-deoxy-D-xylulose-5-phosphate (DXP). This Anaeromyxobacter dehalogenans (strain 2CP-C) protein is 1-deoxy-D-xylulose-5-phosphate synthase.